Reading from the N-terminus, the 633-residue chain is Proline-rich protein LAS17 (633 aa).

The WH1 domain occupies 16 to 127 (LPKASNKIID…KRVQKRERYA (112 aa)). Disordered regions lie at residues 145–545 (REEQ…TTGD) and 563–606 (ALRK…PASL). Residues 192 to 215 (AETFDSDQTSSFSDINSTTASAPT) are compositionally biased toward low complexity. Pro residues-rich tracts occupy residues 216 to 225 (TPAPALPPAS) and 238 to 256 (SLPPLPNQFAPLPDPPQHN). 2 stretches are compositionally biased toward low complexity: residues 257 to 269 (SPPQNNAPSQPQS) and 307 to 322 (PQQNRPLPQLPNRNNR). A Phosphothreonine modification is found at Thr334. Ser337 bears the Phosphoserine mark. Over residues 342-357 (PAPPPPPRRGPAPPPP) the composition is skewed to pro residues. Polar residues-rich tracts occupy residues 363–376 (TSNTLNSAGGNSLL), 399–414 (NVTMQQNPQQYNNSNR), and 454–465 (PQNTQAPSQATN). Positions 479-488 (QSQIPQSAPS) are enriched in low complexity. Residues 547–567 (GRDALLASIRGAGGIGALRKV) form the WH2 domain. Ser588 carries the post-translational modification Phosphoserine.

Interacts with KRE6, LSB3, LSB5 and YSC84.

The chain is Proline-rich protein LAS17 (LAS17) from Saccharomyces cerevisiae (strain ATCC 204508 / S288c) (Baker's yeast).